Consider the following 509-residue polypeptide: Nucleoprotein (509 aa).

The tract at residues 1 to 404 (MSSVLKAYER…ANTLAKLTTA (404 aa)) is ncore. Residues Lys-180, Arg-195, Tyr-260, Tyr-350, and Arg-354 each contribute to the RNA site. The interval 405 to 509 (NRGADTRGGV…LNAALGDLDI (105 aa)) is ntail. Residues 452–477 (GTHDDEMPPLEEEEEDDTSAGPRTGP) are disordered. Acidic residues predominate over residues 458–469 (MPPLEEEEEDDT).

The protein belongs to the paramyxoviruses nucleocapsid family. Homomultimer; forms the nucleocapsid. Binds to the viral genomic RNA. N0 interacts with the phosphoprotein (via N-terminus); this interaction allows P to chaperon N0 to avoid N polymerization before encapsidation. Interacts as N-RNA template with the phosphoprotein (via C-terminus); this interaction positions the polymerase on the template.

The protein resides in the virion. The protein localises to the host cytoplasm. Forms the helical nucleocapsid (NC), protecting the genome from nucleases. The encapsidated genomic RNA serves as template for transcription and replication; encapsidation by N is coupled to RNA synthesis. Forms the encapsidation complex with the phosphoprotein protein P. Before encapsidation, the newly synthesized free N protein, so-called N0, is chaperoned by P. The protein is Nucleoprotein (NP) of Canis lupus familiaris (Dog).